The primary structure comprises 123 residues: Large ribosomal subunit protein bL19c (123 aa).

The protein belongs to the bacterial ribosomal protein bL19 family.

It localises to the plastid. The protein resides in the chloroplast. The sequence is that of Large ribosomal subunit protein bL19c from Pyropia yezoensis (Susabi-nori).